A 342-amino-acid chain; its full sequence is Phomopsin biosynthesis cluster protein B' (342 aa).

Residues Met-1 to Pro-22 form a disordered region. The helical transmembrane segment at Val-87–Ala-107 threads the bilayer. Residues Cys-118–Gln-186 are disordered. The span at His-144–Asn-155 shows a compositional bias: low complexity. The N-linked (GlcNAc...) asparagine glycan is linked to Asn-248.

The protein resides in the membrane. Part of the gene cluster that mediates the biosynthesis of the phomopsins, a group of hexapeptide mycotoxins which infects lupins and causes lupinosis disease in livestock. The role of phomB' within the phomopsins biosynthesis pathway has still to be determined. The pathway starts with the processing of the precursor phomA by several endopeptidases including kexin proteases as well as the cluster-specific S41 family peptidase phomP1 and the oligopeptidase phomG to produce 10 identical copies of the hexapeptide Tyr-Val-Ile-Pro-Ile-Asp. After being excised from the precursor peptide, the core peptides are cyclized and modified post-translationally by enzymes encoded within the gene cluster. The timing and order of proteolysis of the phomA precursor and PTMs are still unknown. Two tyrosinase-like enzymes, phomQ1 and phomQ2, catalyze the chlorination and hydroxylation of Tyr, respectively. PhomYb, is proposed to be involved in the construction of the macrocyclic structure. The other 4 ustYa family proteins may be involved in PTMs that generate the unique structure of phomopsin A. PhomYa is required for the hydroxylation of C-beta of Tyr. PhomYc, phomYd, and phomYe are responsible for the biosynthesis of 2,3-dehydroisoleucine (dIle), 2,3-dehydroaspartic acid (dAsp), and 3,4-dehydroproline (dPro), respectively. While dIle formation by phomYc is indispensable for the installation of dAsp by phomYd, the order of the other PTMs have not been elucidated yet. Most of the biosynthetic enzymes likely have broad substrate specificity, and thus, there might be a metabolic grid from a precursor to phomopsin A. The enzyme(s) responsible for the biosynthesis of 3,4-dehydrovaline (dVal) have also not been identified yet. Finally, phomM acts as an S-adenosylmethionine-dependent alpha-N-methyltransferase that catalyzes two successive N-methylation reactions, converting N-desmethyl-phomopsin A to phomopsin A and phomopsin A further to an N,N-dimethylated congener called phomopsin E. The protein is Phomopsin biosynthesis cluster protein B' of Diaporthe leptostromiformis (Lupinosis disease fungus).